The chain runs to 130 residues: UPF0251 protein Swol_2090 (130 aa).

The protein belongs to the UPF0251 family.

This is UPF0251 protein Swol_2090 from Syntrophomonas wolfei subsp. wolfei (strain DSM 2245B / Goettingen).